Consider the following 1295-residue polypeptide: Phosphoribosylformylglycinamidine synthase (1295 aa).

Residues 305–327 (WPGAATGSGGEIRDEGATGRGAK) form a disordered region. Residues 307–318 (GAATGSGGEIRD) and A678 contribute to the ATP site. Mg(2+) is bound by residues E718, N722, and D884. Position 886 (S886) interacts with ATP. Residues 1042–1295 (VAVLREQGVN…IFRNARKQLG (254 aa)) form the Glutamine amidotransferase type-1 domain. C1135 acts as the Nucleophile in catalysis. Active-site residues include H1260 and E1262.

It in the N-terminal section; belongs to the FGAMS family. In terms of assembly, monomer.

It is found in the cytoplasm. The catalysed reaction is N(2)-formyl-N(1)-(5-phospho-beta-D-ribosyl)glycinamide + L-glutamine + ATP + H2O = 2-formamido-N(1)-(5-O-phospho-beta-D-ribosyl)acetamidine + L-glutamate + ADP + phosphate + H(+). It participates in purine metabolism; IMP biosynthesis via de novo pathway; 5-amino-1-(5-phospho-D-ribosyl)imidazole from N(2)-formyl-N(1)-(5-phospho-D-ribosyl)glycinamide: step 1/2. In terms of biological role, phosphoribosylformylglycinamidine synthase involved in the purines biosynthetic pathway. Catalyzes the ATP-dependent conversion of formylglycinamide ribonucleotide (FGAR) and glutamine to yield formylglycinamidine ribonucleotide (FGAM) and glutamate. The polypeptide is Phosphoribosylformylglycinamidine synthase (Shigella boydii serotype 4 (strain Sb227)).